A 335-amino-acid polypeptide reads, in one-letter code: Holliday junction branch migration complex subunit RuvB (335 aa).

Residues Ala4–Tyr184 are large ATPase domain (RuvB-L). Residues Ile23, Arg24, Gly65, Lys68, Thr69, Thr70, Glu131–Tyr133, Arg174, Tyr184, and Arg221 each bind ATP. Thr69 serves as a coordination point for Mg(2+). Residues Ser185–Asp255 are small ATPAse domain (RuvB-S). A head domain (RuvB-H) region spans residues Asp258–Asp335. DNA contacts are provided by Arg294, Arg313, and Arg318.

This sequence belongs to the RuvB family. In terms of assembly, homohexamer. Forms an RuvA(8)-RuvB(12)-Holliday junction (HJ) complex. HJ DNA is sandwiched between 2 RuvA tetramers; dsDNA enters through RuvA and exits via RuvB. An RuvB hexamer assembles on each DNA strand where it exits the tetramer. Each RuvB hexamer is contacted by two RuvA subunits (via domain III) on 2 adjacent RuvB subunits; this complex drives branch migration. In the full resolvosome a probable DNA-RuvA(4)-RuvB(12)-RuvC(2) complex forms which resolves the HJ.

It localises to the cytoplasm. The catalysed reaction is ATP + H2O = ADP + phosphate + H(+). In terms of biological role, the RuvA-RuvB-RuvC complex processes Holliday junction (HJ) DNA during genetic recombination and DNA repair, while the RuvA-RuvB complex plays an important role in the rescue of blocked DNA replication forks via replication fork reversal (RFR). RuvA specifically binds to HJ cruciform DNA, conferring on it an open structure. The RuvB hexamer acts as an ATP-dependent pump, pulling dsDNA into and through the RuvAB complex. RuvB forms 2 homohexamers on either side of HJ DNA bound by 1 or 2 RuvA tetramers; 4 subunits per hexamer contact DNA at a time. Coordinated motions by a converter formed by DNA-disengaged RuvB subunits stimulates ATP hydrolysis and nucleotide exchange. Immobilization of the converter enables RuvB to convert the ATP-contained energy into a lever motion, pulling 2 nucleotides of DNA out of the RuvA tetramer per ATP hydrolyzed, thus driving DNA branch migration. The RuvB motors rotate together with the DNA substrate, which together with the progressing nucleotide cycle form the mechanistic basis for DNA recombination by continuous HJ branch migration. Branch migration allows RuvC to scan DNA until it finds its consensus sequence, where it cleaves and resolves cruciform DNA. The sequence is that of Holliday junction branch migration complex subunit RuvB from Haemophilus influenzae (strain 86-028NP).